The following is a 124-amino-acid chain: Urease subunit beta (124 aa).

Belongs to the urease beta subunit family. As to quaternary structure, heterotrimer of UreA (gamma), UreB (beta) and UreC (alpha) subunits. Three heterotrimers associate to form the active enzyme.

It localises to the cytoplasm. It carries out the reaction urea + 2 H2O + H(+) = hydrogencarbonate + 2 NH4(+). The protein operates within nitrogen metabolism; urea degradation; CO(2) and NH(3) from urea (urease route): step 1/1. The sequence is that of Urease subunit beta from Ureaplasma parvum serovar 3 (strain ATCC 27815 / 27 / NCTC 11736).